Here is a 314-residue protein sequence, read N- to C-terminus: Cytosolic sulfotransferase 3 (314 aa).

71 to 76 (KSGTLW) is a binding site for 3'-phosphoadenylyl sulfate. His-121 acts as the Proton acceptor in catalysis. 3'-phosphoadenylyl sulfate contacts are provided by residues Arg-143, Ser-151, Tyr-209, and 275 to 277 (RKG).

This sequence belongs to the sulfotransferase 1 family.

It is found in the cytoplasm. Sulfotransferase that utilizes 3'-phospho-5'-adenylyl sulfate (PAPS) as sulfonate donor. The polypeptide is Cytosolic sulfotransferase 3 (SOT3) (Arabidopsis thaliana (Mouse-ear cress)).